The following is a 343-amino-acid chain: Aspartate carbamoyltransferase catalytic subunit (343 aa).

R91 and T92 together coordinate carbamoyl phosphate. Position 119 (K119) interacts with L-aspartate. Carbamoyl phosphate-binding residues include R141, H171, and Q174. The L-aspartate site is built by R204 and R259. Carbamoyl phosphate is bound by residues G300 and P301.

This sequence belongs to the aspartate/ornithine carbamoyltransferase superfamily. ATCase family. Heterododecamer (2C3:3R2) of six catalytic PyrB chains organized as two trimers (C3), and six regulatory PyrI chains organized as three dimers (R2).

It carries out the reaction carbamoyl phosphate + L-aspartate = N-carbamoyl-L-aspartate + phosphate + H(+). Its pathway is pyrimidine metabolism; UMP biosynthesis via de novo pathway; (S)-dihydroorotate from bicarbonate: step 2/3. Its function is as follows. Catalyzes the condensation of carbamoyl phosphate and aspartate to form carbamoyl aspartate and inorganic phosphate, the committed step in the de novo pyrimidine nucleotide biosynthesis pathway. This Burkholderia cenocepacia (strain HI2424) protein is Aspartate carbamoyltransferase catalytic subunit.